The following is a 223-amino-acid chain: Large ribosomal subunit protein uL6c (223 aa).

A chloroplast-targeting transit peptide spans M1–C41.

It belongs to the universal ribosomal protein uL6 family. Part of the 50S ribosomal subunit.

The protein resides in the plastid. The protein localises to the chloroplast. In terms of biological role, this protein binds directly to 23S ribosomal RNA and is located at the aminoacyl-tRNA binding site of the peptidyltransferase center. The protein is Large ribosomal subunit protein uL6c (RPL6) of Arabidopsis thaliana (Mouse-ear cress).